A 426-amino-acid polypeptide reads, in one-letter code: Enolase (426 aa).

Position 163 (Gln-163) interacts with (2R)-2-phosphoglycerate. Glu-205 acts as the Proton donor in catalysis. Positions 242, 283, and 310 each coordinate Mg(2+). (2R)-2-phosphoglycerate is bound by residues Lys-335, Arg-364, Ser-365, and Lys-386. Residue Lys-335 is the Proton acceptor of the active site.

Belongs to the enolase family. It depends on Mg(2+) as a cofactor.

It is found in the cytoplasm. Its subcellular location is the secreted. The protein localises to the cell surface. The catalysed reaction is (2R)-2-phosphoglycerate = phosphoenolpyruvate + H2O. It participates in carbohydrate degradation; glycolysis; pyruvate from D-glyceraldehyde 3-phosphate: step 4/5. Catalyzes the reversible conversion of 2-phosphoglycerate (2-PG) into phosphoenolpyruvate (PEP). It is essential for the degradation of carbohydrates via glycolysis. This Paenarthrobacter aurescens (strain TC1) protein is Enolase.